The following is a 1074-amino-acid chain: Semaphorin-5A (1074 aa).

An N-terminal signal peptide occupies residues 1 to 22; it reads MKGTCVIAWLFSSLGLWRLAHP. Over 23 to 968 the chain is Extracellular; it reads EAQGTTQCQR…EEKRCGEFNM (946 aa). The region spanning 35-484 is the Sema domain; that stretch reads HPVISYKEIG…LREHVVKIPL (450 aa). 2 cysteine pairs are disulfide-bonded: Cys-104-Cys-114 and Cys-131-Cys-140. Asn-142, Asn-168, Asn-227, and Asn-277 each carry an N-linked (GlcNAc...) asparagine glycan. 2 disulfides stabilise this stretch: Cys-254/Cys-357 and Cys-278/Cys-320. 3 N-linked (GlcNAc...) asparagine glycosylation sites follow: Asn-323, Asn-367, and Asn-437. 2 disulfides stabilise this stretch: Cys-487–Cys-504 and Cys-496–Cys-513. Asn-536 and Asn-591 each carry an N-linked (GlcNAc...) asparagine glycan. 7 TSP type-1 domains span residues 540–593, 595–651, 653–702, 707–765, 784–839, 841–896, and 897–944; these read DGHF…ANCS, NGGW…LLCP, HMFW…NPCP, TTPW…GCST, NGAW…LPCP, DGVW…QPCP, and ESWS…VFDS. Intrachain disulfides connect Cys-607–Cys-644, Cys-611–Cys-650, Cys-622–Cys-634, Cys-665–Cys-696, Cys-669–Cys-701, and Cys-680–Cys-686. The N-linked (GlcNAc...) asparagine glycan is linked to Asn-717. 6 cysteine pairs are disulfide-bonded: Cys-796–Cys-833, Cys-800–Cys-838, Cys-811–Cys-823, Cys-853–Cys-890, Cys-857–Cys-895, and Cys-868–Cys-880. The N-linked (GlcNAc...) asparagine glycan is linked to Asn-933. Residues 969–989 form a helical membrane-spanning segment; sequence FHMIAVGLSSSILGCLLTLLV. At 990–1074 the chain is on the cytoplasmic side; sequence YTYCQRYQQQ…FTDLNNYDEY (85 aa).

The protein belongs to the semaphorin family. In terms of assembly, binds PLXNB3.

The protein localises to the membrane. Its function is as follows. Bifunctional axonal guidance cue regulated by sulfated proteoglycans; attractive effects result from interactions with heparan sulfate proteoglycans (HSPGs), while the inhibitory effects depend on interactions with chondroitin sulfate proteoglycans (CSPGs). Ligand for receptor PLXNB3. In glioma cells, SEMA5A stimulation of PLXNB3 results in the disassembly of F-actin stress fibers, disruption of focal adhesions and cellular collapse as well as inhibition of cell migration and invasion through ARHGDIA-mediated inactivation of RAC1. May promote angiogenesis by increasing endothelial cell proliferation and migration and inhibiting apoptosis. The polypeptide is Semaphorin-5A (SEMA5A) (Homo sapiens (Human)).